The following is a 556-amino-acid chain: MNRRLDNERVIRAPHGSDISAKSWLTEAPLRMLMNNLDPDVAEKPSELIVYGGIGRAARDWDSFDRIVASLRKLEADQTLVVQSGKPVGIFRTHPDAPRVLIANSNIVPHWATLDHFNALDRMGLMMYGQMTAGSWIYIGSQGIVQGTYETFVEVGRRHYHGDLAGKWILTAGLGGMGGAQPLAATMAGASMLAVECQPSRIEMRLRTGYLDRQAASLDEALALMAEAAVTKQAVSVGLLGNAAEIFPELVRRGVRPDIVTDQTSAHDPINGYLPKGWTLAEWEMKRASDPKAVEQASKTSMVGHVQAMLDFHAMGIPTLDYGNNIRQMAKDMGLANAFDFPGFVPAYIRPLFCRGIGPFRWAALSGDPEDIYKTDAKVKELLPDNKHLHNWLDMARQRIKFQGLPARICWVGLGDRHRLGLAFNEMVARGEVKAPIVIGRDHLDSGSVASPNRETEAMKDGSDAVSDWPLLNALLNCASGATWVSLHHGGGVGIGYSQHAGMVIVADGTPDAARRLERVLWNDPATGVMRHADAGYEDAIACADVNGLDLPSLAR.

Residues 52–53 (GG), Gln-130, 176–178 (GMG), Glu-196, Arg-201, 242–243 (NA), 263–267 (QTSAH), 273–274 (YL), and Tyr-322 each bind NAD(+). Cys-410 is an active-site residue. Gly-492 is an NAD(+) binding site.

It belongs to the urocanase family. Requires NAD(+) as cofactor.

Its subcellular location is the cytoplasm. The enzyme catalyses 4-imidazolone-5-propanoate = trans-urocanate + H2O. The protein operates within amino-acid degradation; L-histidine degradation into L-glutamate; N-formimidoyl-L-glutamate from L-histidine: step 2/3. Its function is as follows. Catalyzes the conversion of urocanate to 4-imidazolone-5-propionate. This chain is Urocanate hydratase, found in Bradyrhizobium sp. (strain BTAi1 / ATCC BAA-1182).